Consider the following 71-residue polypeptide: High-potential iron-sulfur protein (71 aa).

Residue Gln-1 is modified to Pyrrolidone carboxylic acid. 4 residues coordinate [4Fe-4S] cluster: Cys-37, Cys-40, Cys-50, and Cys-64.

It belongs to the high-potential iron-sulfur protein (HiPIP) family. In terms of assembly, homodimer.

Functionally, specific class of high-redox-potential 4Fe-4S ferredoxins. Functions in anaerobic electron transport in most purple and in some other photosynthetic bacteria and in at least one genus (Paracoccus) of halophilic, denitrifying bacteria. In Halomonas halodenitrificans (strain ATCC 12084 / NCIMB 8669) (Paracoccus halodenitrificans), this protein is High-potential iron-sulfur protein (hip).